A 404-amino-acid polypeptide reads, in one-letter code: Probable tRNA sulfurtransferase (404 aa).

The 106-residue stretch at 60 to 165 (RSVIEALKPV…DEAAYLSHED (106 aa)) folds into the THUMP domain. ATP is bound by residues 183 to 184 (ML), 208 to 209 (HF), arginine 265, glycine 287, and glutamine 296.

It belongs to the ThiI family.

It localises to the cytoplasm. It carries out the reaction [ThiI sulfur-carrier protein]-S-sulfanyl-L-cysteine + a uridine in tRNA + 2 reduced [2Fe-2S]-[ferredoxin] + ATP + H(+) = [ThiI sulfur-carrier protein]-L-cysteine + a 4-thiouridine in tRNA + 2 oxidized [2Fe-2S]-[ferredoxin] + AMP + diphosphate. The enzyme catalyses [ThiS sulfur-carrier protein]-C-terminal Gly-Gly-AMP + S-sulfanyl-L-cysteinyl-[cysteine desulfurase] + AH2 = [ThiS sulfur-carrier protein]-C-terminal-Gly-aminoethanethioate + L-cysteinyl-[cysteine desulfurase] + A + AMP + 2 H(+). It participates in cofactor biosynthesis; thiamine diphosphate biosynthesis. Functionally, catalyzes the ATP-dependent transfer of a sulfur to tRNA to produce 4-thiouridine in position 8 of tRNAs, which functions as a near-UV photosensor. Also catalyzes the transfer of sulfur to the sulfur carrier protein ThiS, forming ThiS-thiocarboxylate. This is a step in the synthesis of thiazole, in the thiamine biosynthesis pathway. The sulfur is donated as persulfide by IscS. This chain is Probable tRNA sulfurtransferase, found in Streptococcus equi subsp. equi (strain 4047).